The chain runs to 433 residues: Enolase (433 aa).

Q167 provides a ligand contact to (2R)-2-phosphoglycerate. Residue E209 is the Proton donor of the active site. The Mg(2+) site is built by D246, E291, and D318. (2R)-2-phosphoglycerate contacts are provided by K343, R372, S373, and K394. Residue K343 is the Proton acceptor of the active site.

The protein belongs to the enolase family. As to quaternary structure, component of the RNA degradosome, a multiprotein complex involved in RNA processing and mRNA degradation. Mg(2+) serves as cofactor.

It localises to the cytoplasm. It is found in the secreted. Its subcellular location is the cell surface. The catalysed reaction is (2R)-2-phosphoglycerate = phosphoenolpyruvate + H2O. It functions in the pathway carbohydrate degradation; glycolysis; pyruvate from D-glyceraldehyde 3-phosphate: step 4/5. Functionally, catalyzes the reversible conversion of 2-phosphoglycerate (2-PG) into phosphoenolpyruvate (PEP). It is essential for the degradation of carbohydrates via glycolysis. The chain is Enolase from Edwardsiella ictaluri (strain 93-146).